The primary structure comprises 230 residues: uncharacterized protein (230 aa).

Transmembrane regions (helical) follow at residues 34-54 (FFAG…MNFQ), 56-76 (VVQY…GLMF), 87-107 (MLFA…GMVI), 111-131 (GLGA…LMSV), 146-166 (MLFI…FLGS), 167-187 (PMFQ…YIAY), and 205-225 (VSLY…IGIF).

The protein belongs to the BI1 family.

Its subcellular location is the cell membrane. This is an uncharacterized protein from Helicobacter pylori (strain ATCC 700392 / 26695) (Campylobacter pylori).